The chain runs to 625 residues: Mesothelin (625 aa).

A signal peptide spans 1-35 (MALPTARPLLGSCGSPICSRSFLLLLLSLGWIPRL). Asn-93 carries an N-linked (GlcNAc...) asparagine glycan. At Ser-202 the chain carries Phosphoserine. Cys-304 and Cys-328 form a disulfide bridge. N-linked (GlcNAc...) asparagine glycosylation is found at Asn-390, Asn-488, and Asn-517. Ser-600 carries the GPI-anchor amidated serine lipid modification. The propeptide at 601-625 (SRASLLGPGFVLIWIPALLPALRLS) is removed in mature form.

Belongs to the mesothelin family. As to quaternary structure, interacts with MUC16. In terms of processing, proteolytically cleaved by a furin-like convertase to generate megakaryocyte-potentiating factor (MPF), and the cleaved form of mesothelin. As to expression, highly expressed in lung and heart. Expressed at low levels in spleen, liver, kidney and testis. Present in lung (at protein level).

It localises to the cell membrane. The protein resides in the golgi apparatus. The protein localises to the secreted. Its function is as follows. Membrane-anchored forms may play a role in cellular adhesion. Megakaryocyte-potentiating factor (MPF) may potentiate megakaryocyte colony formation. This is Mesothelin (Msln) from Mus musculus (Mouse).